Reading from the N-terminus, the 391-residue chain is UPF0229 protein BCA_0588 (391 aa).

The segment covering 1–16 has biased composition (polar residues); sequence MGEENQPNYTISQENW. Disordered stretches follow at residues 1 to 31 and 80 to 117; these read MGEENQPNYTISQENWSLHRKGYDDQQRHQE and HVGQGNGDSKVGDVVARDGSGGQKQKGPGKGQGAGDAA. Residues 21-31 are compositionally biased toward basic and acidic residues; that stretch reads KGYDDQQRHQE. Positions 98-115 are enriched in gly residues; that stretch reads GSGGQKQKGPGKGQGAGD.

Belongs to the UPF0229 family.

The chain is UPF0229 protein BCA_0588 from Bacillus cereus (strain 03BB102).